The sequence spans 271 residues: Ribosomal RNA small subunit methyltransferase J (271 aa).

Residues 116–117 (RD), 132–133 (ER), 168–169 (SS), and aspartate 190 contribute to the S-adenosyl-L-methionine site.

The protein belongs to the methyltransferase superfamily. RsmJ family.

The protein localises to the cytoplasm. The enzyme catalyses guanosine(1516) in 16S rRNA + S-adenosyl-L-methionine = N(2)-methylguanosine(1516) in 16S rRNA + S-adenosyl-L-homocysteine + H(+). Its function is as follows. Specifically methylates the guanosine in position 1516 of 16S rRNA. The chain is Ribosomal RNA small subunit methyltransferase J from Shewanella piezotolerans (strain WP3 / JCM 13877).